Reading from the N-terminus, the 135-residue chain is ATP synthase epsilon chain (135 aa).

The protein belongs to the ATPase epsilon chain family. In terms of assembly, F-type ATPases have 2 components, CF(1) - the catalytic core - and CF(0) - the membrane proton channel. CF(1) has five subunits: alpha(3), beta(3), gamma(1), delta(1), epsilon(1). CF(0) has three main subunits: a, b and c.

It localises to the cell inner membrane. Its function is as follows. Produces ATP from ADP in the presence of a proton gradient across the membrane. The sequence is that of ATP synthase epsilon chain from Brucella anthropi (strain ATCC 49188 / DSM 6882 / CCUG 24695 / JCM 21032 / LMG 3331 / NBRC 15819 / NCTC 12168 / Alc 37) (Ochrobactrum anthropi).